Here is a 381-residue protein sequence, read N- to C-terminus: MNLNFMPLLHAYNHVSIDFHFNSSARDFCVHEVPLYEFSNTGEHAVIQVRKSGLSTLEMLQIFSQILGVKIAELGYAGLKDKNALTTQFISLPKKYAPLLEKNTSNFQERNLKILSLNYHHNKIKLGHLKGNRFFMRFKKMTPLNAQKTEQVLEQIAQFGMPNYFGSQRFGKFNDNHKEGLKILQNETKFAHQKLNAFLISSYQSYLFNSLLSKRLEISKIISAFSVKESLEFFKQKNLSVHSNALKALKNQAHPFKILEGDVMRHYPYGKFFDALELEKESERFLNKEAVPTGLLDGKKALYAKNLSLEIEKGFQHNLLSGHAKTLGSRRFFWVFVENITSQYIKEKAQFELEFYLPKGSYASALLKEIKHEKGENNDEF.

The Nucleophile role is filled by D81. The 176-residue stretch at 160–335 (GMPNYFGSQR…TLGSRRFFWV (176 aa)) folds into the TRUD domain.

The protein belongs to the pseudouridine synthase TruD family.

The catalysed reaction is uridine(13) in tRNA = pseudouridine(13) in tRNA. Functionally, responsible for synthesis of pseudouridine from uracil-13 in transfer RNAs. This Helicobacter pylori (strain J99 / ATCC 700824) (Campylobacter pylori J99) protein is tRNA pseudouridine synthase D.